A 252-amino-acid polypeptide reads, in one-letter code: Protein HEAT-INDUCED TAS1 TARGET 2 (252 aa).

This sequence belongs to the heat induced plant HTT protein family. Expressed ubiquitously, including in seedlings, leaves, stems, inflorescences and siliques.

It is found in the cytoplasm. The protein localises to the nucleus. Its function is as follows. Mediates both basal and acquired thermotolerance via HSFA1s-directed pathways (e.g. HSFA1A, HSFA1B, and HSFA1D). Triggers the expression of HSFA1A and HSFA1B. In Arabidopsis thaliana (Mouse-ear cress), this protein is Protein HEAT-INDUCED TAS1 TARGET 2.